Consider the following 400-residue polypeptide: MAFLADALSRVKPSATIAVSQKARELKAKGRDVIGLGAGEPDFDTPDNIKKAAIDAINRGETKYTPVSGIPELRKAIAAKFKRENGLDYSWEQTIVGTGGKQILFNAFMATLNPGDEVSIPAPYWVSYPEMVALCGGTRFFVSATQEHNFKLQAADLEKAITPKTKWFIFNSPSNPTGAAYTHDELKALTDVLMKNPQVWVLTDDMYEHLTYGDFKFVTPVEVEPQLYDRTLTMNGVSKAYAMTGWRIGYAAGPIQLIKAMDMIQGQQTSGATSIAQWAAVEALNGTQDFIPENKKIFEGRRDLVVSMLNQAKGIVCPVPEGAFYVYPSCKGLIGKTAPSGKVIETDEDFVSELLESEGVAVVHGSAFGLGPNFRISYATSEEQLEEACRRIQRFCGACK.

The L-aspartate site is built by Gly39, Trp125, and Asn175. Lys239 bears the N6-(pyridoxal phosphate)lysine mark. Position 375 (Arg375) interacts with L-aspartate.

The protein belongs to the class-I pyridoxal-phosphate-dependent aminotransferase family. In terms of assembly, homodimer. The cofactor is pyridoxal 5'-phosphate.

Its subcellular location is the cytoplasm. It carries out the reaction L-aspartate + 2-oxoglutarate = oxaloacetate + L-glutamate. It catalyses the reaction L-arogenate + 2-oxoglutarate = prephenate + L-glutamate. In terms of biological role, catalyzes the reversible conversion of aspartate and 2-oxoglutarate to glutamate and oxaloacetate. Can also transaminate prephenate in the presence of glutamate. This Rhizobium leguminosarum bv. phaseoli protein is Probable aspartate/prephenate aminotransferase (aspC).